We begin with the raw amino-acid sequence, 440 residues long: Integral membrane protein GPR180 (440 aa).

Positions 1 to 22 (MGGLRLLAVALTCCWWPQGSQG) are cleaved as a signal peptide. 2 N-linked (GlcNAc...) asparagine glycosylation sites follow: Asn-105 and Asn-110. 7 helical membrane-spanning segments follow: residues 173–193 (FFFL…QSLW), 202–222 (MHMI…SALA), 249–269 (IASQ…WTIV), 284–304 (TPAS…LLLW), 321–341 (LAGI…GCGL), 360–380 (FAKG…ISVI), and 389–409 (VITI…YRLF).

The protein resides in the membrane. This Homo sapiens (Human) protein is Integral membrane protein GPR180 (GPR180).